The primary structure comprises 393 residues: G protein-activated inward rectifier potassium channel 3 (393 aa).

Positions 1 to 23 (MAQENAAFSPGSEEPPRRRGRQR) are disordered. At 1–57 (MAQENAAFSPGSEEPPRRRGRQRYVEKDGRCNVQQGNVRETYRYLTDLFTTLVDLQW) the chain is on the cytoplasmic side. A helical membrane pass occupies residues 58–82 (RLSLLFFVLAYALTWLFFGAIWWLI). The Extracellular portion of the chain corresponds to 83–106 (AYGRGDLEHLEDTAWTPCVNNLNG). Residues 107 to 118 (FVAAFLFSIETE) constitute an intramembrane region (helical; Pore-forming). An intramembrane region (pore-forming) is located at residues 119-125 (TTIGYGH). Positions 120–125 (TIGYGH) match the Selectivity filter motif. Residues 126–134 (RVITDQCPE) are Extracellular-facing. A helical transmembrane segment spans residues 135–156 (GIVLLLLQAILGSMVNAFMVGC). The Cytoplasmic portion of the chain corresponds to 157 to 393 (MFVKISQPNK…LPPPESESKV (237 aa)). A disordered region spans residues 360 to 393 (KVEEEGAGEGAGAGDGADKEQNGCLPPPESESKV). Residues 384-393 (LPPPESESKV) are compositionally biased toward pro residues. The PDZ-binding motif lies at 390 to 393 (ESKV).

It belongs to the inward rectifier-type potassium channel (TC 1.A.2.1) family. KCNJ9 subfamily. Associates with KCNJ3/GIRK1 to form a G-protein-activated heteromultimer pore-forming unit. Interacts (via PDZ-binding motif) with SNX27 (via PDZ domain); the interaction is required when endocytosed to prevent degradation in lysosomes and promote recycling to the plasma membrane.

The protein resides in the membrane. It catalyses the reaction K(+)(in) = K(+)(out). Its function is as follows. This receptor is controlled by G proteins. Inward rectifier potassium channels are characterized by a greater tendency to allow potassium to flow into the cell rather than out of it. Their voltage dependence is regulated by the concentration of extracellular potassium; as external potassium is raised, the voltage range of the channel opening shifts to more positive voltages. The inward rectification is mainly due to the blockage of outward current by internal magnesium. Unable to produce channel activity when expressed alone but forms a functional channel in association with KCNJ3/GIRK1. The chain is G protein-activated inward rectifier potassium channel 3 (Kcnj9) from Rattus norvegicus (Rat).